Consider the following 272-residue polypeptide: 2-succinyl-6-hydroxy-2,4-cyclohexadiene-1-carboxylate synthase (272 aa).

It belongs to the AB hydrolase superfamily. MenH family. In terms of assembly, monomer.

It catalyses the reaction 5-enolpyruvoyl-6-hydroxy-2-succinyl-cyclohex-3-ene-1-carboxylate = (1R,6R)-6-hydroxy-2-succinyl-cyclohexa-2,4-diene-1-carboxylate + pyruvate. It functions in the pathway quinol/quinone metabolism; 1,4-dihydroxy-2-naphthoate biosynthesis; 1,4-dihydroxy-2-naphthoate from chorismate: step 3/7. It participates in quinol/quinone metabolism; menaquinone biosynthesis. Catalyzes a proton abstraction reaction that results in 2,5-elimination of pyruvate from 2-succinyl-5-enolpyruvyl-6-hydroxy-3-cyclohexene-1-carboxylate (SEPHCHC) and the formation of 2-succinyl-6-hydroxy-2,4-cyclohexadiene-1-carboxylate (SHCHC). This is 2-succinyl-6-hydroxy-2,4-cyclohexadiene-1-carboxylate synthase from Yersinia pestis bv. Antiqua (strain Nepal516).